We begin with the raw amino-acid sequence, 455 residues long: RTGSCANGDDIILAVKGEDVWLYDTLSASFAELGLNYNFDERTKKREELWFMSHQAMLVDGIYIPKLEPERIVSILEWDRSKELMHRTEAICAAMIEAWGYTELLQEIRKFYLWLLSKDEFKELAASGKAPYIAETALRKLYTNVNTQPNELQRYLEVLDFNHIDGCCESVSLQSGKETVENLDAGKESKKETSDKGNKPQNSQVGQGSKEPTKTGTVSKDVNVGSKGKEVPRLQKITKKMNLPTVGGKIILGLDHLLEYKPNQVDLFNTRATKTQFESWYSAVKVEYDLNDEQMGVIMNGFMVWCIDNGTSPDVNGVWVMMDGEEQVEYPLKPIVENAKPTLRQIMHHFSDAAEAYIEMRNSESPYMPRYGLLRNLRDRELARYAFDFYEVTSKTPNRAREAIAQMKAAALAGINSRLFGLDGNISTNSENTERHTARDVNQNMHTLLGMGPPQ.

Cysteine 5 serves as the catalytic For nuclear inclusion protein A activity. Positions 182–198 (NLDAGKESKKETSDKGN) are enriched in basic and acidic residues. Positions 182–225 (NLDAGKESKKETSDKGNKPQNSQVGQGSKEPTKTGTVSKDVNVG) are disordered.

The protein belongs to the potyviridae genome polyprotein family. Genome polyprotein of potyviruses undergoes post-translational proteolytic processing by the main proteinase NIa-pro resulting in the production of at least ten individual proteins. The P1 proteinase and the HC-pro cleave only their respective C-termini autocatalytically. 6K1 is essential for proper proteolytic separation of P3 from CI.

The protein resides in the virion. It catalyses the reaction RNA(n) + a ribonucleoside 5'-triphosphate = RNA(n+1) + diphosphate. An RNA-dependent RNA polymerase that plays an essential role in the virus replication. Functionally, involved in aphid transmission, cell-to-cell and systemis movement, encapsidation of the viral RNA and in the regulation of viral RNA amplification. This Citrullus lanatus (Watermelon) protein is Genome polyprotein.